Here is a 248-residue protein sequence, read N- to C-terminus: ATP synthase subunit a, chloroplastic (248 aa).

Transmembrane regions (helical) follow at residues 38 to 58 (QVLLTSWVVIAVLLGSATIAV), 96 to 116 (VPFIGTMFLFIFVSNWSGALL), 135 to 155 (INTTVALALLTSVAYFYAGLT), 200 to 220 (LVVAVLVSLVPLIVPIPVMFL), and 221 to 241 (GLFTSGIQALIFATLAAAYIG).

Belongs to the ATPase A chain family. F-type ATPases have 2 components, CF(1) - the catalytic core - and CF(0) - the membrane proton channel. CF(1) has five subunits: alpha(3), beta(3), gamma(1), delta(1), epsilon(1). CF(0) has four main subunits: a, b, b' and c.

The protein resides in the plastid. It is found in the chloroplast thylakoid membrane. In terms of biological role, key component of the proton channel; it plays a direct role in the translocation of protons across the membrane. The chain is ATP synthase subunit a, chloroplastic from Pinus thunbergii (Japanese black pine).